The sequence spans 517 residues: Amidophosphoribosyltransferase (517 aa).

Met-1 bears the N-acetylmethionine mark. Positions 1-11 are excised as a propeptide; sequence MELEELGIREE. Cys-12 functions as the Nucleophile in the catalytic mechanism. The Glutamine amidotransferase type-2 domain occupies 12 to 261; it reads CGVFGCIASG…PGEIVEISRH (250 aa). Cys-280 is a [4Fe-4S] cluster binding site. 3 residues coordinate Mg(2+): Ser-327, Asp-389, and Asp-390. Positions 426, 503, and 506 each coordinate [4Fe-4S] cluster.

It in the C-terminal section; belongs to the purine/pyrimidine phosphoribosyltransferase family. Homotetramer. The cofactor is Mg(2+). Requires [4Fe-4S] cluster as cofactor.

The catalysed reaction is 5-phospho-beta-D-ribosylamine + L-glutamate + diphosphate = 5-phospho-alpha-D-ribose 1-diphosphate + L-glutamine + H2O. The protein operates within purine metabolism; IMP biosynthesis via de novo pathway; N(1)-(5-phospho-D-ribosyl)glycinamide from 5-phospho-alpha-D-ribose 1-diphosphate: step 1/2. Catalyzes the formation of phosphoribosylamine from phosphoribosylpyrophosphate (PRPP) and glutamine. The protein is Amidophosphoribosyltransferase of Mus musculus (Mouse).